A 428-amino-acid chain; its full sequence is Enolase 1 (428 aa).

Glutamine 167 serves as a coordination point for (2R)-2-phosphoglycerate. Catalysis depends on glutamate 209, which acts as the Proton donor. Mg(2+) is bound by residues aspartate 246, glutamate 288, and aspartate 315. The (2R)-2-phosphoglycerate site is built by lysine 340, arginine 369, serine 370, and lysine 391. Residue lysine 340 is the Proton acceptor of the active site.

It belongs to the enolase family. Component of the RNA degradosome, a multiprotein complex involved in RNA processing and mRNA degradation. It depends on Mg(2+) as a cofactor.

It is found in the cytoplasm. The protein resides in the secreted. The protein localises to the cell surface. The catalysed reaction is (2R)-2-phosphoglycerate = phosphoenolpyruvate + H2O. Its pathway is carbohydrate degradation; glycolysis; pyruvate from D-glyceraldehyde 3-phosphate: step 4/5. Functionally, catalyzes the reversible conversion of 2-phosphoglycerate (2-PG) into phosphoenolpyruvate (PEP). It is essential for the degradation of carbohydrates via glycolysis. The polypeptide is Enolase 1 (Pseudomonas syringae pv. tomato (strain ATCC BAA-871 / DC3000)).